A 132-amino-acid polypeptide reads, in one-letter code: ATP synthase epsilon chain, chloroplastic (132 aa).

Thr2 carries the post-translational modification N-acetylthreonine.

Belongs to the ATPase epsilon chain family. F-type ATPases have 2 components, CF(1) - the catalytic core - and CF(0) - the membrane proton channel. CF(1) has five subunits: alpha(3), beta(3), gamma(1), delta(1), epsilon(1). CF(0) has three main subunits: a, b and c.

The protein resides in the plastid. It is found in the chloroplast thylakoid membrane. Functionally, produces ATP from ADP in the presence of a proton gradient across the membrane. The polypeptide is ATP synthase epsilon chain, chloroplastic (Arabidopsis thaliana (Mouse-ear cress)).